Consider the following 338-residue polypeptide: MPKPQSKRSSLPNYIKSRGELIASLQALLANDHVDLEILRSGVPWPSATEIVQLSQVSESNEDAPVAACHSSNEPVVVDPALGDDSHQAHIDLDVNWLSNLIPYNGDELSEQPDSSLFCSPPERMSVSDSSNNTDYLSHFSSSSICQWDNLLDSIGSQTFQDTINVLSPHCQDSGVSQPSNLADDTLGQGQPVSTVVQPQHPGSTERDESVSSIASSQESPRKRQRPHYAIEKRYRAGLQERFEALRDCVASLKKTQHEQRLPGTNEDLAEGDDGGSVSDRATVGRMNKAEVLNQATLCIRQLQEENEVVMEYIKLLIKQFRVMKQAMQQALKVDINS.

Disordered stretches follow at residues 171 to 230 and 256 to 277; these read CQDS…PHYA and TQHE…DGGS. The span at 174 to 203 shows a compositional bias: polar residues; it reads SGVSQPSNLADDTLGQGQPVSTVVQPQHPG. The segment at 223–236 is basic motif; it reads KRQRPHYAIEKRYR. Residues 223 to 303 enclose the bHLH domain; sequence KRQRPHYAIE…NQATLCIRQL (81 aa). The helix-loop-helix motif stretch occupies residues 237–303; the sequence is AGLQERFEAL…NQATLCIRQL (67 aa).

Its subcellular location is the nucleus. Transcription factor that specifically regulates the expression of the gene cluster that mediates the biosynthesis of gramillins A and B, bicyclic lipopeptides that induce cell death in maize leaves but not in wheat leaves. The protein is Transcription factor GRA2 (GRA2) of Gibberella zeae (strain ATCC MYA-4620 / CBS 123657 / FGSC 9075 / NRRL 31084 / PH-1) (Wheat head blight fungus).